A 382-amino-acid polypeptide reads, in one-letter code: Nitric oxide reductase FlRd-NAD(+) reductase (382 aa).

The protein belongs to the FAD-dependent oxidoreductase family. FAD is required as a cofactor.

It localises to the cytoplasm. The enzyme catalyses 2 reduced [nitric oxide reductase rubredoxin domain] + NAD(+) + H(+) = 2 oxidized [nitric oxide reductase rubredoxin domain] + NADH. Its pathway is nitrogen metabolism; nitric oxide reduction. Its function is as follows. One of at least two accessory proteins for anaerobic nitric oxide (NO) reductase. Reduces the rubredoxin moiety of NO reductase. The protein is Nitric oxide reductase FlRd-NAD(+) reductase of Vibrio vulnificus (strain YJ016).